The sequence spans 287 residues: 4-diphosphocytidyl-2-C-methyl-D-erythritol kinase (287 aa).

The active site involves K22. P102–S112 contacts ATP. The active site involves D139.

Belongs to the GHMP kinase family. IspE subfamily.

It carries out the reaction 4-CDP-2-C-methyl-D-erythritol + ATP = 4-CDP-2-C-methyl-D-erythritol 2-phosphate + ADP + H(+). It participates in isoprenoid biosynthesis; isopentenyl diphosphate biosynthesis via DXP pathway; isopentenyl diphosphate from 1-deoxy-D-xylulose 5-phosphate: step 3/6. Functionally, catalyzes the phosphorylation of the position 2 hydroxy group of 4-diphosphocytidyl-2C-methyl-D-erythritol. The sequence is that of 4-diphosphocytidyl-2-C-methyl-D-erythritol kinase from Dinoroseobacter shibae (strain DSM 16493 / NCIMB 14021 / DFL 12).